We begin with the raw amino-acid sequence, 66 residues long: Hirudin-PA (66 aa).

Positions 1–3 are interaction with thrombin active site; sequence ITY. 3 disulfide bridges follow: Cys-6–Cys-14, Cys-16–Cys-28, and Cys-22–Cys-39. The tract at residues 39-66 is disordered; sequence CVTGEGTPKPQSHNQGDFEPIPEDAYDE. The O-linked (GalNAc...) threonine glycan is linked to Thr-45. The segment at 55-66 is interaction with fibrinogen-binding exosite of thrombin; that stretch reads DFEPIPEDAYDE. Tyr-64 is subject to Sulfotyrosine.

This sequence belongs to the protease inhibitor I14 (hirudin) family.

It is found in the secreted. Functionally, hirudin is a potent thrombin-specific protease inhibitor. It forms a stable non-covalent complex with alpha-thrombin, thereby abolishing its ability to cleave fibrinogen. This is Hirudin-PA from Hirudo medicinalis (Medicinal leech).